The primary structure comprises 442 residues: Probable 6-phospho-beta-glucosidase (442 aa).

5-73 is an NAD(+) binding site; that stretch reads LKIVTIGGGS…VPIDIHLTLD (69 aa). Substrate contacts are provided by Arg-96 and Asn-150. Residues Cys-172 and His-202 each contribute to the Mn(2+) site. The active-site Proton acceptor is Tyr-256.

This sequence belongs to the glycosyl hydrolase 4 family. NAD(+) is required as a cofactor. The cofactor is a divalent metal cation.

The enzyme catalyses 6-phospho-beta-D-glucosyl-(1-&gt;4)-D-glucose + H2O = D-glucose 6-phosphate + D-glucose. Its function is as follows. Hydrolyzes phospho-beta-glucosides. This is Probable 6-phospho-beta-glucosidase (licH) from Bacillus subtilis (strain 168).